The chain runs to 232 residues: Ubiquinone biosynthesis O-methyltransferase (232 aa).

S-adenosyl-L-methionine-binding residues include Arg36, Gly55, Asp76, and Leu120.

The protein belongs to the methyltransferase superfamily. UbiG/COQ3 family.

It catalyses the reaction a 3-demethylubiquinol + S-adenosyl-L-methionine = a ubiquinol + S-adenosyl-L-homocysteine + H(+). It carries out the reaction a 3-(all-trans-polyprenyl)benzene-1,2-diol + S-adenosyl-L-methionine = a 2-methoxy-6-(all-trans-polyprenyl)phenol + S-adenosyl-L-homocysteine + H(+). It functions in the pathway cofactor biosynthesis; ubiquinone biosynthesis. Functionally, O-methyltransferase that catalyzes the 2 O-methylation steps in the ubiquinone biosynthetic pathway. This is Ubiquinone biosynthesis O-methyltransferase from Pseudomonas fluorescens (strain ATCC BAA-477 / NRRL B-23932 / Pf-5).